The chain runs to 233 residues: Putative nosiheptide resistance regulatory protein (233 aa).

Residues 93–112 (RKAARQAADYSRPMIEQAVA) constitute a DNA-binding region (H-T-H motif). Positions 190-233 (PPEATEVPESGRLTSVDGSAEAVLDPEVQAKEAAEEAAKRDDQA) are disordered. Basic and acidic residues predominate over residues 217–233 (VQAKEAAEEAAKRDDQA).

In terms of biological role, seems to be involved in the regulation of nhs expression. The protein is Putative nosiheptide resistance regulatory protein of Streptomyces actuosus.